A 165-amino-acid polypeptide reads, in one-letter code: Protein SprT (165 aa).

The region spanning 22–163 (LAQANLKLDR…RCVHCGEPLV (142 aa)) is the SprT-like domain. Residue His-78 participates in Zn(2+) binding. Glu-79 is a catalytic residue. His-82 lines the Zn(2+) pocket.

It belongs to the SprT family. Requires Zn(2+) as cofactor.

Its subcellular location is the cytoplasm. The polypeptide is Protein SprT (Salmonella paratyphi A (strain ATCC 9150 / SARB42)).